Consider the following 456-residue polypeptide: Arginine biosynthesis bifunctional protein ArgJ, mitochondrial (456 aa).

Residues T184, K213, T224, E311, N451, and T456 each contribute to the substrate site. T224 (nucleophile) is an active-site residue.

It belongs to the ArgJ family. As to quaternary structure, heterodimer of an alpha and a beta chain. In terms of processing, the alpha and beta chains are autoproteolytically processed from a single precursor protein within the mitochondrion.

It is found in the mitochondrion matrix. The catalysed reaction is N(2)-acetyl-L-ornithine + L-glutamate = N-acetyl-L-glutamate + L-ornithine. The enzyme catalyses L-glutamate + acetyl-CoA = N-acetyl-L-glutamate + CoA + H(+). It participates in amino-acid biosynthesis; L-arginine biosynthesis; L-ornithine and N-acetyl-L-glutamate from L-glutamate and N(2)-acetyl-L-ornithine (cyclic): step 1/1. It functions in the pathway amino-acid biosynthesis; L-arginine biosynthesis; N(2)-acetyl-L-ornithine from L-glutamate: step 1/4. Catalyzes two activities which are involved in the cyclic version of arginine biosynthesis: the synthesis of acetylglutamate from glutamate and acetyl-CoA, and of ornithine by transacetylation between acetylornithine and glutamate. The polypeptide is Arginine biosynthesis bifunctional protein ArgJ, mitochondrial (Aspergillus niger (strain ATCC MYA-4892 / CBS 513.88 / FGSC A1513)).